Reading from the N-terminus, the 187-residue chain is Thermosensitive gluconokinase (187 aa).

Position 10-17 (10-17 (GVSGSGKT)) interacts with ATP.

The protein belongs to the gluconokinase GntK/GntV family.

The enzyme catalyses D-gluconate + ATP = 6-phospho-D-gluconate + ADP + H(+). The protein operates within carbohydrate acid metabolism; L-idonate degradation. The protein is Thermosensitive gluconokinase (idnK) of Escherichia coli (strain K12).